A 194-amino-acid polypeptide reads, in one-letter code: uncharacterized protein (194 aa).

In terms of domain architecture, Exonuclease spans 20–185 (RIFIDTETTG…ADCRMTLGII (166 aa)).

This is an uncharacterized protein from Escherichia coli (Bacteriophage 186).